Here is a 434-residue protein sequence, read N- to C-terminus: Anaerobic glycerol-3-phosphate dehydrogenase subunit B (434 aa).

It belongs to the anaerobic G-3-P dehydrogenase subunit B family. As to quaternary structure, composed of a catalytic GlpA/B dimer and of membrane bound GlpC. The cofactor is FMN.

The catalysed reaction is a quinone + sn-glycerol 3-phosphate = dihydroxyacetone phosphate + a quinol. It participates in polyol metabolism; glycerol degradation via glycerol kinase pathway; glycerone phosphate from sn-glycerol 3-phosphate (anaerobic route): step 1/1. Its function is as follows. Conversion of glycerol 3-phosphate to dihydroxyacetone. Uses fumarate or nitrate as electron acceptor. The chain is Anaerobic glycerol-3-phosphate dehydrogenase subunit B from Histophilus somni (strain 2336) (Haemophilus somnus).